Here is a 345-residue protein sequence, read N- to C-terminus: NADPH dehydrogenase (345 aa).

Residue 23–26 (SPMC) coordinates FMN. Position 28 (Tyr28) interacts with substrate. FMN-binding residues include Ala60 and Gln102. 164–167 (HGAH) lines the substrate pocket. FMN contacts are provided by residues Arg215 and 307 to 308 (GR).

The protein belongs to the NADH:flavin oxidoreductase/NADH oxidase family. NamA subfamily. Homotetramer. FMN serves as cofactor.

It catalyses the reaction A + NADPH + H(+) = AH2 + NADP(+). Functionally, catalyzes the reduction of the double bond of an array of alpha,beta-unsaturated aldehydes and ketones. It also reduces the nitro group of nitroester and nitroaromatic compounds. It could have a role in detoxification processes. This chain is NADPH dehydrogenase, found in Bacillus cereus (strain AH820).